Consider the following 197-residue polypeptide: Small ribosomal subunit protein uS4c (197 aa).

One can recognise an S4 RNA-binding domain in the interval 92–153 (MRLDAVVYRL…APIVEHAKTF (62 aa)).

This sequence belongs to the universal ribosomal protein uS4 family. As to quaternary structure, part of the 30S ribosomal subunit. Contacts protein S5. The interaction surface between S4 and S5 is involved in control of translational fidelity.

It is found in the plastid. It localises to the chloroplast. Functionally, one of the primary rRNA binding proteins, it binds directly to 16S rRNA where it nucleates assembly of the body of the 30S subunit. Its function is as follows. With S5 and S12 plays an important role in translational accuracy. The chain is Small ribosomal subunit protein uS4c (rps4) from Ostreococcus tauri.